Reading from the N-terminus, the 137-residue chain is Endoribonuclease YbeY (137 aa).

3 residues coordinate Zn(2+): His-107, His-111, and Asp-117.

The protein belongs to the endoribonuclease YbeY family. The cofactor is Zn(2+).

Its subcellular location is the cytoplasm. Functionally, single strand-specific metallo-endoribonuclease involved in late-stage 70S ribosome quality control and in maturation of the 3' terminus of the 16S rRNA. The chain is Endoribonuclease YbeY from Bacteroides thetaiotaomicron (strain ATCC 29148 / DSM 2079 / JCM 5827 / CCUG 10774 / NCTC 10582 / VPI-5482 / E50).